Consider the following 150-residue polypeptide: Large ribosomal subunit protein uL15 (150 aa).

Positions 1 to 51 (MKLHTLRPAKGSVKTSKRIGRGTGSGRGGTSTKGHKGAKSRSGYSSKIGFE) are disordered. The span at 21-31 (RGTGSGRGGTS) shows a compositional bias: gly residues.

The protein belongs to the universal ribosomal protein uL15 family. Part of the 50S ribosomal subunit.

In terms of biological role, binds to the 23S rRNA. The chain is Large ribosomal subunit protein uL15 from Cytophaga hutchinsonii (strain ATCC 33406 / DSM 1761 / CIP 103989 / NBRC 15051 / NCIMB 9469 / D465).